Reading from the N-terminus, the 412-residue chain is Ribosomal RNA large subunit methyltransferase G (412 aa).

Positions 386 to 412 are disordered; the sequence is KAEPHENGESSSDTPNPQSSLYGGVKR. Residues 394–406 are compositionally biased toward polar residues; it reads ESSSDTPNPQSSL.

This sequence belongs to the methyltransferase superfamily. RlmG family.

It localises to the cytoplasm. It carries out the reaction guanosine(1835) in 23S rRNA + S-adenosyl-L-methionine = N(2)-methylguanosine(1835) in 23S rRNA + S-adenosyl-L-homocysteine + H(+). Specifically methylates the guanine in position 1835 (m2G1835) of 23S rRNA. The polypeptide is Ribosomal RNA large subunit methyltransferase G (Shewanella sediminis (strain HAW-EB3)).